Reading from the N-terminus, the 429-residue chain is Gamma-glutamyl phosphate reductase (429 aa).

The protein belongs to the gamma-glutamyl phosphate reductase family.

Its subcellular location is the cytoplasm. The catalysed reaction is L-glutamate 5-semialdehyde + phosphate + NADP(+) = L-glutamyl 5-phosphate + NADPH + H(+). The protein operates within amino-acid biosynthesis; L-proline biosynthesis; L-glutamate 5-semialdehyde from L-glutamate: step 2/2. Its function is as follows. Catalyzes the NADPH-dependent reduction of L-glutamate 5-phosphate into L-glutamate 5-semialdehyde and phosphate. The product spontaneously undergoes cyclization to form 1-pyrroline-5-carboxylate. The polypeptide is Gamma-glutamyl phosphate reductase (Sphingopyxis alaskensis (strain DSM 13593 / LMG 18877 / RB2256) (Sphingomonas alaskensis)).